Here is a 330-residue protein sequence, read N- to C-terminus: Putative F-box protein At1g57690 (330 aa).

The F-box domain maps to 25–72 (VDIISSLPDVILQHILFSFQTKYAIRTSVLSKRWRHEADAINKALSQY).

The chain is Putative F-box protein At1g57690 from Arabidopsis thaliana (Mouse-ear cress).